Here is a 447-residue protein sequence, read N- to C-terminus: MNKNTWIIGFTLFAMFFGAGNLIFPPNLGLESGQYFWPSILAFALTGIGLPLLGVIVGALDKQGYIGSLNKISPKFSIIFLIIIYLTIGPLFAIPRTASTSFEMTVTPIANTNSNLALFIFTVIYFLIVLYLCINPSRMVDRIGSLLTPLLLITILAMIVKGFVDYGSNSHSQATDAFTSNFSGFSQGFTNGYLTMDAIAAIAFSMIVVNAVKATGVTHANKIFKQTLMAGIIAAVALMFIYISLGYIGNHMAVSQEKIASLTANDQNIGTYLLTTMASVGFGTFGKYLLGIIVALACLTTACGLVVAVSEYFHRIFPRISYKIYVIIFTLISFILANQGLNSVITMSVPVLSIVYPIAITSVLLILLARFVPTKPIAQQIPVAIVSIVSILSMIHTQGWIKLSFIDSLPLKSYSLEWFPIAIVTTIIGYIVAAMVKKQKPIVYEKE.

12 helical membrane passes run 6–26 (WIIGFTLFAMFFGAGNLIFPP), 40–60 (ILAFALTGIGLPLLGVIVGAL), 74–94 (PKFSIIFLIIIYLTIGPLFAI), 116–136 (LALFIFTVIYFLIVLYLCINP), 143–163 (IGSLLTPLLLITILAMIVKGF), 192–212 (GYLTMDAIAAIAFSMIVVNAV), 228–248 (LMAGIIAAVALMFIYISLGYI), 289–309 (LLGIIVALACLTTACGLVVAV), 324–344 (IYVIIFTLISFILANQGLNSV), 349–369 (VPVLSIVYPIAITSVLLILLA), 381–401 (IPVAIVSIVSILSMIHTQGWI), and 416–436 (LEWFPIAIVTTIIGYIVAAMV).

It belongs to the branched chain amino acid transporter family.

The protein localises to the cell membrane. Component of the transport system for branched-chain amino acids (leucine, isoleucine and valine), which is coupled to a proton motive force. The sequence is that of Putative branched-chain amino acid carrier protein SSP1343 from Staphylococcus saprophyticus subsp. saprophyticus (strain ATCC 15305 / DSM 20229 / NCIMB 8711 / NCTC 7292 / S-41).